A 1149-amino-acid chain; its full sequence is MTSTGQDSSTRQRKSRHNPQSPLQESSATLKRGGKKCAVPHSSPNLAEVKKKGKMKKLSQPAEEDLVVGLQGLDLNPETRVPVGTGLVFDEQLNDFHCLWDDSFPESPERLHAIREQLILEGLLGRCVSFQARFAEKEELMLVHSLEYIDLMETTQYMNEGELRVLAETYDSVYLHPNSYSCACLATGSVLRLVDALMGAEIRNGMAVIRPPGHHAQHNLMDGYCMFNHLAVAARYAQKKHRIQRVLIVDWDVHHGQGTQFIFDQDPSVLYFSIHRYEHGRFWPHLKASNWSTIGFGQGQGYTINVPWNQTGMRDADYIAAFLHILLPVASEFQPQLVLVAAGFDALHGDPKGEMAATPAGFAHLTHLLMGLAGGKLILSLEGGYNLRALAKGVSASLHTLLGDPCPMLESCVVPCASAQTSIYCTLEALEPFWEVLERSVETQEEDEVEEAVLEEEEEEGGWEATALPMDTWPLLQNRTGLVYDEKMMSHCNLWDNHHPETPQRILRIMCHLEEVGLAARCLILPARPALDSELLTCHSAEYVEHLRTTEKMKTRDLHREGANFDSIYICPSTFACAKLATGAACRLVEAVLSGEVLNGIAVVRPPGHHAEPNAACGFCFFNSVAVAARHAQIIAGRALRILIVDWDVHHGNGTQHIFEDDPSVLYVSLHRYDRGTFFPMGDEGASSQVGRDAGIGFTVNVPWNGPRMGDADYLAAWHRLVLPIAYEFNPELVLISAGFDAAQGDPLGGCQVTPEGYAHLTHLLMGLAGGRIILILEGGYNLASISESMAACTHSLLGDPPPQLTLLRPPQSGALVSISEVIQVHRKYWRSLRLMKMEDKEECSSSRLVIKKLPPTASPVSAKEMTTPKGKVPEESVRKTIAALPGKESTLGQAKSKMAKAVLAQGQSSEQAAKGTTLDLATSKETVGGATTDLWASAAAPENFPNQTTSVEALGETEPTPPASHTNKQTTGASPLQGVTAQQSLQLGVLSTLELSREAEEAHDSEEGLLGEAAGGQDMNSLMLTQGFGDFNTQDVFYAVTPLSWCPHLMAVCPIPAAGLDVSQPCKTCGTVQENWVCLTCYQVYCSRYVNAHMVCHHEASEHPLVLSCVDLSTWCYVCQAYVHHEDLQDVKNAAHQNKFGEDMPHSH.

Residues 1 to 61 (MTSTGQDSST…KGKMKKLSQP (61 aa)) form a disordered region. A compositionally biased stretch (polar residues) spans 18–29 (NPQSPLQESSAT). Ser21 carries the phosphoserine modification. Omega-N-methylarginine is present on Arg32. Ser43 is modified (phosphoserine). Positions 66-75 (LVVGLQGLDL) match the Nuclear export signal motif. Histone deacetylase stretches follow at residues 87–403 (LVFD…TLLG) and 481–799 (GLVY…SLLG). His215 serves as the catalytic 1. The 2 role is filled by His610. Positions 954-975 (ALGETEPTPPASHTNKQTTGAS) are disordered. Phosphothreonine occurs at positions 958, 961, 967, and 971. Polar residues predominate over residues 964–975 (ASHTNKQTTGAS). The residue at position 975 (Ser975) is a Phosphoserine. Residues 1045–1143 (SWCPHLMAVC…NAAHQNKFGE (99 aa)) form a UBP-type zinc finger. Zn(2+)-binding residues include Cys1047, His1049, Cys1067, Cys1070, Cys1079, Cys1082, and Cys1087. The ubiquitin binding stretch occupies residues 1088–1090 (SRY). Zn(2+) contacts are provided by His1094, His1098, His1104, Cys1117, and Cys1120. The interval 1116–1123 (WCYVCQAY) is ubiquitin binding. Ser1148 bears the Phosphoserine mark.

The protein belongs to the histone deacetylase family. HD type 2 subfamily. In terms of assembly, forms a trimeric complex in the nucleus consisting of BANP, HDAC6 and KHDRBS1/SAM68; HDAC6 keeps KHDRBS1 in a deacetylated state which inhibits the inclusion of CD44 alternate exons. The complex is disrupted by MAPK1/MAPK3-mediated phosphorylation of BANP which results in BANP export to the cytoplasm. This facilitates acetylation of KHDRBS1 and CD44 variant exon inclusion. Interacts with SIRT2 (via both phosphorylated, unphosphorylated, active or inactive forms); the interaction is necessary for the complex to interact with alpha-tubulin. Under proteasome impairment conditions, interacts with UBD via its histone deacetylase 1 and UBP-type zinc-finger regions. Interacts with BBIP1, CBFA2T3, CYLD, DDIT3/CHOP, ZMYND15, F-actin and HDAC11. Interacts with RIPOR2; this interaction occurs during early myogenic differentiation and prevents HDAC6 to deacetylate tubulin. Interacts with AURKA; AURKA-mediated phosphorylation of HDAC6 promotes deacetylation of alpha-tubulin. Interacts with DYSF; this interaction occurs during early myogenic differentiation. Interacts with TPPP; inhibiting the tubulin deacetylase activity of HDAC6. Interacts with DYNLL1. Interacts with ATP13A2; the interaction results in recruitment of HDAC6 to lysosomes to promote CTTN deacetylation. Interacts with CCDC141 (via the N-terminal region); inhibiting the deacetylase activity of HDAC6. Interacts with IPO7; the interaction facilitates HDAC6 nuclear translocation in dental papilla cells. It depends on Zn(2+) as a cofactor. Post-translationally, phosphorylated by AURKA; phosphorylation increases HDAC6-mediated deacetylation of alpha-tubulin and subsequent disassembly of cilia. Ubiquitinated. Its polyubiquitination however does not lead to its degradation. In terms of processing, sumoylated in vitro. Expressed in neurons of the cortex. Expressed in Purkinje cells. Detected in keratinocytes (at protein level).

The protein localises to the cytoplasm. It is found in the cytoskeleton. The protein resides in the nucleus. It localises to the perikaryon. Its subcellular location is the cell projection. The protein localises to the dendrite. It is found in the axon. The protein resides in the cilium. It localises to the microtubule organizing center. Its subcellular location is the centrosome. The protein localises to the cilium basal body. The enzyme catalyses N(6)-acetyl-L-lysyl-[protein] + H2O = L-lysyl-[protein] + acetate. The catalysed reaction is N(6)-acetyl-L-lysyl-[alpha-tubulin] + H2O = L-lysyl-[alpha-tubulin] + acetate. Its pathway is protein modification; protein ubiquitination. Deacetylates a wide range of non-histone substrates. Plays a central role in microtubule-dependent cell motility by mediating deacetylation of tubulin. Required for cilia disassembly via deacetylation of alpha-tubulin. Alpha-tubulin deacetylation results in destabilization of dynamic microtubules. Promotes deacetylation of CTTN, leading to actin polymerization, promotion of autophagosome-lysosome fusion and completion of autophagy. Deacetylates SQSTM1. Deacetylates peroxiredoxins PRDX1 and PRDX2, decreasing their reducing activity. Deacetylates antiviral protein RIGI in the presence of viral mRNAs which is required for viral RNA detection by RIGI. Sequentially deacetylates and polyubiquitinates DNA mismatch repair protein MSH2 which leads to MSH2 degradation, reducing cellular sensitivity to DNA-damaging agents and decreasing cellular DNA mismatch repair activities. Deacetylates DNA mismatch repair protein MLH1 which prevents recruitment of the MutL alpha complex (formed by the MLH1-PMS2 heterodimer) to the MutS alpha complex (formed by the MSH2-MSH6 heterodimer), leading to tolerance of DNA damage. Deacetylates RHOT1/MIRO1 which blocks mitochondrial transport and mediates axon growth inhibition. Deacetylates transcription factor SP1 which leads to increased expression of ENG, positively regulating angiogenesis. Deacetylates KHDRBS1/SAM68 which regulates alternative splicing by inhibiting the inclusion of CD44 alternate exons. Promotes odontoblast differentiation following IPO7-mediated nuclear import and subsequent repression of RUNX2 expression. In addition to its protein deacetylase activity, plays a key role in the degradation of misfolded proteins: when misfolded proteins are too abundant to be degraded by the chaperone refolding system and the ubiquitin-proteasome, mediates the transport of misfolded proteins to a cytoplasmic juxtanuclear structure called aggresome. Probably acts as an adapter that recognizes polyubiquitinated misfolded proteins and target them to the aggresome, facilitating their clearance by autophagy. This chain is Protein deacetylase HDAC6, found in Mus musculus (Mouse).